The primary structure comprises 261 residues: Transmembrane protein 187 (261 aa).

6 helical membrane-spanning segments follow: residues 8–28 (AFVHVAVAGGLCAVAVFTGIF), 43–63 (APVAGLPAFLAMPFNSLVNMA), 88–108 (VFAAMALLYGPVQWLRLWTQW), 113–133 (VLDQWLTLPIFAWPVAWCLYL), 140–162 (WLFLSLECVSLASYGLALLHPQG), and 190–210 (SATYLALGVLSCLGFVVLKLC).

In terms of tissue distribution, ubiquitous.

It localises to the membrane. In Homo sapiens (Human), this protein is Transmembrane protein 187 (TMEM187).